Consider the following 683-residue polypeptide: E3 ubiquitin-protein ligase RNF103 (683 aa).

4 helical membrane-spanning segments follow: residues 6 to 26 (FFLLLYFLVLFVLARFFEAIV), 326 to 346 (LFVLSLVLVNLMAWMDLFITQ), 366 to 386 (LLIISWLPVLGFLQLPYLDSF), and 411 to 431 (MFYTSHPALFLSTYLGHGLLI). A compositionally biased stretch (acidic residues) spans 525-542 (EEMSESSQDTENDSDSDN). The disordered stretch occupies residues 525–548 (EEMSESSQDTENDSDSDNMDTFSS). An RING-type zinc finger spans residues 619-661 (CVVCLENFENGCLLMGLPCGHVFHQNCIVMWLAGGRHCCPVCR).

In terms of assembly, interacts with DERL1 and VCP. As to expression, highly expressed in the normal cerebellum but not in the cerebral cortex.

The protein localises to the endoplasmic reticulum membrane. It carries out the reaction S-ubiquitinyl-[E2 ubiquitin-conjugating enzyme]-L-cysteine + [acceptor protein]-L-lysine = [E2 ubiquitin-conjugating enzyme]-L-cysteine + N(6)-ubiquitinyl-[acceptor protein]-L-lysine.. It participates in protein modification; protein ubiquitination. In terms of biological role, acts as an E2-dependent E3 ubiquitin-protein ligase, probably involved in the ER-associated protein degradation pathway. This is E3 ubiquitin-protein ligase RNF103 (Rnf103) from Mus musculus (Mouse).